A 146-amino-acid chain; its full sequence is Hemoglobin subunit beta (146 aa).

The Globin domain maps to 2-146 (FLTAEEKGLV…VANALAHKYH (145 aa)). The residue at position 44 (Ser44) is a Phosphoserine. At Lys59 the chain carries N6-acetyllysine. Heme b is bound at residue His63. Lys82 carries the post-translational modification N6-acetyllysine. Residue His92 coordinates heme b. An S-nitrosocysteine modification is found at Cys93. Lys144 is modified (N6-acetyllysine).

This sequence belongs to the globin family. In terms of assembly, heterotetramer of two alpha chains and two beta chains. In terms of tissue distribution, red blood cells.

Functionally, involved in oxygen transport from the lung to the various peripheral tissues. In Lynx lynx (Eurasian lynx), this protein is Hemoglobin subunit beta (HBB).